The following is a 789-amino-acid chain: Homocitrate dehydratase, mitochondrial (789 aa).

A mitochondrion-targeting transit peptide spans 1–14 (MLSSANRFYIKRHL). Substrate contacts are provided by residues Gln96 and 189–191 (DSH). Residues Cys385, Cys448, and Cys451 each coordinate [4Fe-4S] cluster. Substrate-binding positions include Arg476, Arg481, Lys610, and 672–673 (AR).

It belongs to the aconitase/IPM isomerase family. Requires [4Fe-4S] cluster as cofactor.

Its subcellular location is the mitochondrion. The catalysed reaction is (2R)-homocitrate = cis-homoaconitate + H2O. Its pathway is amino-acid biosynthesis; L-lysine biosynthesis via AAA pathway; L-alpha-aminoadipate from 2-oxoglutarate: step 2/5. Functionally, catalyzes the reversible dehydration of (R)-homocitrate to cis-homoaconitate, a step in the alpha-aminoadipate pathway for lysine biosynthesis. The chain is Homocitrate dehydratase, mitochondrial (ACO2) from Saccharomyces cerevisiae (strain ATCC 204508 / S288c) (Baker's yeast).